The chain runs to 534 residues: MTKYIFVTGGVASSVGKGITVASLGRLLKSRGISVSIQKLDPYINVDPGTMSPYQHGEVFVTEDGAETDLDLGHYERFIDENLSRVNNITTGQIYSSVIQKERRGDFLGGTIQVIPHITNEIKSRVALVAKNTNADVVIVEIGGTVGDIESLPFLEAIRQMKKDVGRDNVMYIHVTLLPYLQASGELKTKPTQHSIAELRRVGISPAVVLCRSDLPVDDDMREKIALFADLPNEAVVALPTVDSIYEVPLVLEEAGLGDLIIERLALAAQPVQLDEWRSLVARIKQPKRHTTVAIVGKYVELRDAYMSVAESVRHAGWAQDIQVDIKWVSSEELEVADPVTMLGDVQGIIVPGGFGYRGVEGKIRAVRYARENKIPFLGLCLGMQCATIEFARFALNAPDANSTEFNPNTKLPVIDFMPDQLDISDKGGTMRLGVYPCILAPDTKAAKAYGRELALERHRHRFEFNNKYRKAMEAAGFVISGHSPDGRLVEIVELRDHPWFVASQFHPEFKSRPNNPHPLFRDFVQAALEQIAE.

The segment at M1–L267 is amidoligase domain. S13 contacts CTP. S13 contributes to the UTP binding site. S14–I19 lines the ATP pocket. Y54 lines the L-glutamine pocket. D71 is a binding site for ATP. 2 residues coordinate Mg(2+): D71 and E141. CTP-binding positions include D148–E150, K188–Q193, and K224. UTP contacts are provided by residues K188 to Q193 and K224. Residues T292–E534 enclose the Glutamine amidotransferase type-1 domain. G354 contacts L-glutamine. C381 serves as the catalytic Nucleophile; for glutamine hydrolysis. Residues L382–Q385, E405, and R462 contribute to the L-glutamine site. Catalysis depends on residues H507 and E509.

The protein belongs to the CTP synthase family. Homotetramer.

It carries out the reaction UTP + L-glutamine + ATP + H2O = CTP + L-glutamate + ADP + phosphate + 2 H(+). It catalyses the reaction L-glutamine + H2O = L-glutamate + NH4(+). The enzyme catalyses UTP + NH4(+) + ATP = CTP + ADP + phosphate + 2 H(+). The protein operates within pyrimidine metabolism; CTP biosynthesis via de novo pathway; CTP from UDP: step 2/2. With respect to regulation, allosterically activated by GTP, when glutamine is the substrate; GTP has no effect on the reaction when ammonia is the substrate. The allosteric effector GTP functions by stabilizing the protein conformation that binds the tetrahedral intermediate(s) formed during glutamine hydrolysis. Inhibited by the product CTP, via allosteric rather than competitive inhibition. Its function is as follows. Catalyzes the ATP-dependent amination of UTP to CTP with either L-glutamine or ammonia as the source of nitrogen. Regulates intracellular CTP levels through interactions with the four ribonucleotide triphosphates. This is CTP synthase from Herpetosiphon aurantiacus (strain ATCC 23779 / DSM 785 / 114-95).